A 168-amino-acid polypeptide reads, in one-letter code: MVNKNRQLKEQKVAEIKEKMGKTEAMIMVKYQGLNVEEDTELRKALREAGVEYRVYKNSLAVRAINELGYEGIAQYLEGPIAIAMSYDDPTAPARIINDFAKTHKALELVAGYVQGEVFDVNKVKELASVPAKEVLIAKLLGSFKAPLSNFAYLLSAIKDKKEAEEQA.

This sequence belongs to the universal ribosomal protein uL10 family. Part of the ribosomal stalk of the 50S ribosomal subunit. The N-terminus interacts with L11 and the large rRNA to form the base of the stalk. The C-terminus forms an elongated spine to which L12 dimers bind in a sequential fashion forming a multimeric L10(L12)X complex.

Its function is as follows. Forms part of the ribosomal stalk, playing a central role in the interaction of the ribosome with GTP-bound translation factors. In Clostridium acetobutylicum (strain ATCC 824 / DSM 792 / JCM 1419 / IAM 19013 / LMG 5710 / NBRC 13948 / NRRL B-527 / VKM B-1787 / 2291 / W), this protein is Large ribosomal subunit protein uL10.